Here is a 342-residue protein sequence, read N- to C-terminus: Anthranilate phosphoribosyltransferase (342 aa).

5-phospho-alpha-D-ribose 1-diphosphate contacts are provided by residues glycine 80, 83-84, threonine 88, 90-93, 108-116, and serine 120; these read GD, NIST, and KHGNRAVSS. Glycine 80 contributes to the anthranilate binding site. Serine 92 lines the Mg(2+) pocket. Asparagine 111 is a binding site for anthranilate. Anthranilate is bound at residue arginine 166. Mg(2+)-binding residues include aspartate 225 and glutamate 226.

This sequence belongs to the anthranilate phosphoribosyltransferase family. As to quaternary structure, homodimer. It depends on Mg(2+) as a cofactor.

It carries out the reaction N-(5-phospho-beta-D-ribosyl)anthranilate + diphosphate = 5-phospho-alpha-D-ribose 1-diphosphate + anthranilate. Its pathway is amino-acid biosynthesis; L-tryptophan biosynthesis; L-tryptophan from chorismate: step 2/5. Functionally, catalyzes the transfer of the phosphoribosyl group of 5-phosphorylribose-1-pyrophosphate (PRPP) to anthranilate to yield N-(5'-phosphoribosyl)-anthranilate (PRA). In Halalkalibacterium halodurans (strain ATCC BAA-125 / DSM 18197 / FERM 7344 / JCM 9153 / C-125) (Bacillus halodurans), this protein is Anthranilate phosphoribosyltransferase.